Here is a 201-residue protein sequence, read N- to C-terminus: Small ribosomal subunit protein uS4 (201 aa).

A disordered region spans residues 26 to 48; the sequence is LSKKNYPPGQHGNSRKRKTSEYG. Residues 92 to 155 enclose the S4 RNA-binding domain; the sequence is GRLDNVVFRL…KSLEVIANSL (64 aa).

It belongs to the universal ribosomal protein uS4 family. As to quaternary structure, part of the 30S ribosomal subunit. Contacts protein S5. The interaction surface between S4 and S5 is involved in control of translational fidelity.

One of the primary rRNA binding proteins, it binds directly to 16S rRNA where it nucleates assembly of the body of the 30S subunit. Functionally, with S5 and S12 plays an important role in translational accuracy. This chain is Small ribosomal subunit protein uS4, found in Bacteroides thetaiotaomicron (strain ATCC 29148 / DSM 2079 / JCM 5827 / CCUG 10774 / NCTC 10582 / VPI-5482 / E50).